Reading from the N-terminus, the 330-residue chain is Aspartate--ammonia ligase (330 aa).

Belongs to the class-II aminoacyl-tRNA synthetase family. AsnA subfamily.

It is found in the cytoplasm. The enzyme catalyses L-aspartate + NH4(+) + ATP = L-asparagine + AMP + diphosphate + H(+). It functions in the pathway amino-acid biosynthesis; L-asparagine biosynthesis; L-asparagine from L-aspartate (ammonia route): step 1/1. The protein is Aspartate--ammonia ligase of Streptococcus pyogenes serotype M49 (strain NZ131).